The primary structure comprises 444 residues: Glutamate--tRNA ligase (444 aa).

The 'HIGH' region motif lies at Pro12–Gly22. Positions Lys213–Arg217 match the 'KMSKS' region motif. Lys216 lines the ATP pocket.

Belongs to the class-I aminoacyl-tRNA synthetase family. Glutamate--tRNA ligase type 1 subfamily. Monomer.

The protein localises to the cytoplasm. The enzyme catalyses tRNA(Glu) + L-glutamate + ATP = L-glutamyl-tRNA(Glu) + AMP + diphosphate. Catalyzes the attachment of glutamate to tRNA(Glu) in a two-step reaction: glutamate is first activated by ATP to form Glu-AMP and then transferred to the acceptor end of tRNA(Glu). The chain is Glutamate--tRNA ligase from Methylacidiphilum infernorum (isolate V4) (Methylokorus infernorum (strain V4)).